Reading from the N-terminus, the 473-residue chain is Cysteine--tRNA ligase (473 aa).

Zn(2+) is bound at residue Cys-30. Residues 32–42 carry the 'HIGH' region motif; sequence MTVYDYCHIGH. Cys-213, His-238, and Glu-242 together coordinate Zn(2+). Positions 270–274 match the 'KMSKS' region motif; it reads KMSKS. Lys-273 contacts ATP.

It belongs to the class-I aminoacyl-tRNA synthetase family. As to quaternary structure, monomer. It depends on Zn(2+) as a cofactor.

Its subcellular location is the cytoplasm. It carries out the reaction tRNA(Cys) + L-cysteine + ATP = L-cysteinyl-tRNA(Cys) + AMP + diphosphate. In Acinetobacter baumannii (strain ACICU), this protein is Cysteine--tRNA ligase.